The following is a 921-amino-acid chain: Isoleucine--tRNA ligase 1 (921 aa).

The 'HIGH' region motif lies at 57–67 (PYANGDIHMGH). An L-isoleucyl-5'-AMP-binding site is contributed by Glu552. Positions 593–597 (KMSKS) match the 'KMSKS' region motif. Residue Lys596 coordinates ATP. Zn(2+)-binding residues include Cys888, Cys891, Cys908, and Cys911.

The protein belongs to the class-I aminoacyl-tRNA synthetase family. IleS type 1 subfamily. In terms of assembly, monomer. Requires Zn(2+) as cofactor.

The protein resides in the cytoplasm. It catalyses the reaction tRNA(Ile) + L-isoleucine + ATP = L-isoleucyl-tRNA(Ile) + AMP + diphosphate. Functionally, catalyzes the attachment of isoleucine to tRNA(Ile). As IleRS can inadvertently accommodate and process structurally similar amino acids such as valine, to avoid such errors it has two additional distinct tRNA(Ile)-dependent editing activities. One activity is designated as 'pretransfer' editing and involves the hydrolysis of activated Val-AMP. The other activity is designated 'posttransfer' editing and involves deacylation of mischarged Val-tRNA(Ile). This Bacillus cereus (strain ZK / E33L) protein is Isoleucine--tRNA ligase 1.